The primary structure comprises 1104 residues: MLRGQTLRWRAALQTPRSLILRPLFAPGGYNVGPRSVLETSRRFRSLPPSLRTFSSSTARRKEKPPPGDEKEDSNKKENKDNDDGTEDKEVERDPRRKQADSSGKHGSSVDPGAPTSGFARRREKAADRDQRSVTEDAKREAEAKGNSSDTPSAIPVSDSSSESKPSGSHNGGDDGGKKGKKNDKALQKPSVPDVYPQVMAIPIAKRPLFPGFYKAITIRDPNVATAIQEMMKRGQPYVGAFLFKDENADGDVIESTDDVYDTGVFAQVTAAYPLRGEQSGVTAVLYPHRRIKISSLIPPGDSTKSGNSEDKTTEKRGDVVASFEENAAELVTKDHYEPTSFLRKYPVSLVNVENLTEEPFDKKSAIIRAVTSEIVNVCKEIATLNPLFRDQISAFYTDQFPGNLSDEPAKLADFAAAVSGGELHELQEVLESMNIEERLPKGLVVLKKELMNAQLQTKISKDVEAKIQKRQREYWLMEQMKGIKRELGIESDGKDKLVEKFKEKAEKLAMPEAVKKVFDEELNKLAHLEPAASEFNVTRNYLDWLTQIPWGQKSVENFGISHATDVLNEDHYGLKDVKDRILEFIAVGKLRGTVEGKILCLVGPPGVGKTSIGKSIARALNRQYYRFSVGGLTDVAEIKGHRRTYVGALPGRIIQALKKCQTENPLILIDEVDKIGRGHQGDPSSALLELLDPEQNSSFLDHYMDVPVDLSKVLFVCTANVTDTIPRPLLDRMELIELSGYVADEKMAIAQKYLAPAARELTGLKNVDVTLTEEAIEELIKSYCRESGVRNLKKQIEKVYRKAAFKIVSDLGEDVLAEDKALTAEGKAAQEESEKETGPIESTSEQEKATTENPRVALNVPDSVHLSIGKDSLTDYVGPPIFTTDRLYDTFPPGVTMGLAWTSMGGAALYVESILENALTPESQPGLDITGNLQNVMKESTQIAYSFVKSVMAKQFPENRFFEKAKLHMHCPEGAVPKDGPSAGITMATSLLSLALNHPLDPTIAMTGELTVTGKVLRIGGLREKTVAARRAGAKTIIFPADNMSDWLELPENIKSGIEGHAVSWYSEVFDILFADLDKQAANRVWQKQLSKEPKKSNDKDDH.

The transit peptide at 1–54 directs the protein to the mitochondrion; it reads MLRGQTLRWRAALQTPRSLILRPLFAPGGYNVGPRSVLETSRRFRSLPPSLRTF. Disordered regions lie at residues 41 to 192 and 296 to 317; these read SRRF…KPSV and SLIP…TEKR. 2 stretches are compositionally biased toward basic and acidic residues: residues 64 to 104 and 125 to 144; these read KPPP…DSSG and KAAD…EAEA. Positions 158–169 are enriched in low complexity; sequence SDSSSESKPSGS. Basic and acidic residues-rich tracts occupy residues 172–187 and 308–317; these read GGDD…DKAL and NSEDKTTEKR. The Lon N-terminal domain maps to 199-451; that stretch reads VMAIPIAKRP…KGLVVLKKEL (253 aa). 604 to 611 is an ATP binding site; sequence GPPGVGKT. A compositionally biased stretch (basic and acidic residues) spans 825–839; it reads AEGKAAQEESEKETG. The tract at residues 825–857 is disordered; it reads AEGKAAQEESEKETGPIESTSEQEKATTENPRV. Residues 891 to 1077 enclose the Lon proteolytic domain; it reads TFPPGVTMGL…SEVFDILFAD (187 aa). Residues Ser-983 and Lys-1026 contribute to the active site.

The protein belongs to the peptidase S16 family. Homohexamer or homoheptamer. Organized in a ring with a central cavity.

It localises to the mitochondrion matrix. It catalyses the reaction Hydrolysis of proteins in presence of ATP.. In terms of biological role, ATP-dependent serine protease that mediates the selective degradation of misfolded, unassembled or oxidatively damaged polypeptides as well as certain short-lived regulatory proteins in the mitochondrial matrix. May also have a chaperone function in the assembly of inner membrane protein complexes. Participates in the regulation of mitochondrial gene expression and in the maintenance of the integrity of the mitochondrial genome. Binds to mitochondrial DNA in a site-specific manner. This Emericella nidulans (strain FGSC A4 / ATCC 38163 / CBS 112.46 / NRRL 194 / M139) (Aspergillus nidulans) protein is Lon protease homolog, mitochondrial (pim1).